The primary structure comprises 461 residues: L-seryl-tRNA(Sec) selenium transferase (461 aa).

Lys294 is subject to N6-(pyridoxal phosphate)lysine.

Belongs to the SelA family. Pyridoxal 5'-phosphate serves as cofactor.

The protein resides in the cytoplasm. The catalysed reaction is L-seryl-tRNA(Sec) + selenophosphate + H(+) = L-selenocysteinyl-tRNA(Sec) + phosphate. Its pathway is aminoacyl-tRNA biosynthesis; selenocysteinyl-tRNA(Sec) biosynthesis; selenocysteinyl-tRNA(Sec) from L-seryl-tRNA(Sec) (bacterial route): step 1/1. Its function is as follows. Converts seryl-tRNA(Sec) to selenocysteinyl-tRNA(Sec) required for selenoprotein biosynthesis. The polypeptide is L-seryl-tRNA(Sec) selenium transferase (Haemophilus influenzae (strain 86-028NP)).